The primary structure comprises 380 residues: Glucose-1-phosphate adenylyltransferase (380 aa).

Alpha-D-glucose 1-phosphate contacts are provided by residues Y99, G164, 179-180, and S190; that span reads EK.

It belongs to the bacterial/plant glucose-1-phosphate adenylyltransferase family. In terms of assembly, homotetramer.

The enzyme catalyses alpha-D-glucose 1-phosphate + ATP + H(+) = ADP-alpha-D-glucose + diphosphate. Its pathway is glycan biosynthesis; glycogen biosynthesis. Involved in the biosynthesis of ADP-glucose, a building block required for the elongation reactions to produce glycogen. Catalyzes the reaction between ATP and alpha-D-glucose 1-phosphate (G1P) to produce pyrophosphate and ADP-Glc. The protein is Glucose-1-phosphate adenylyltransferase of Bacillus subtilis (strain 168).